Here is a 320-residue protein sequence, read N- to C-terminus: 4-diphosphocytidyl-2-C-methyl-D-erythritol kinase (320 aa).

K26 is an active-site residue. P111–A121 contacts ATP. D153 is a catalytic residue.

This sequence belongs to the GHMP kinase family. IspE subfamily.

The catalysed reaction is 4-CDP-2-C-methyl-D-erythritol + ATP = 4-CDP-2-C-methyl-D-erythritol 2-phosphate + ADP + H(+). It participates in isoprenoid biosynthesis; isopentenyl diphosphate biosynthesis via DXP pathway; isopentenyl diphosphate from 1-deoxy-D-xylulose 5-phosphate: step 3/6. Catalyzes the phosphorylation of the position 2 hydroxy group of 4-diphosphocytidyl-2C-methyl-D-erythritol. This is 4-diphosphocytidyl-2-C-methyl-D-erythritol kinase from Mycobacterium marinum (strain ATCC BAA-535 / M).